Reading from the N-terminus, the 358-residue chain is Alanine racemase (358 aa).

The active-site Proton acceptor; specific for D-alanine is Lys34. An N6-(pyridoxal phosphate)lysine modification is found at Lys34. Arg129 serves as a coordination point for substrate. Residue Tyr254 is the Proton acceptor; specific for L-alanine of the active site. Met302 lines the substrate pocket.

This sequence belongs to the alanine racemase family. It depends on pyridoxal 5'-phosphate as a cofactor.

It carries out the reaction L-alanine = D-alanine. The protein operates within amino-acid biosynthesis; D-alanine biosynthesis; D-alanine from L-alanine: step 1/1. In terms of biological role, catalyzes the interconversion of L-alanine and D-alanine. May also act on other amino acids. This Hamiltonella defensa subsp. Acyrthosiphon pisum (strain 5AT) protein is Alanine racemase (alr).